The primary structure comprises 560 residues: Dihydroxy-acid dehydratase (560 aa).

Cys52 contributes to the [2Fe-2S] cluster binding site. Asp84 provides a ligand contact to Mg(2+). Cys125 provides a ligand contact to [2Fe-2S] cluster. The Mg(2+) site is built by Asp126 and Lys127. The residue at position 127 (Lys127) is an N6-carboxylysine. Cys197 contacts [2Fe-2S] cluster. Glu448 contributes to the Mg(2+) binding site. Ser474 acts as the Proton acceptor in catalysis.

The protein belongs to the IlvD/Edd family. Homodimer. The cofactor is [2Fe-2S] cluster. It depends on Mg(2+) as a cofactor.

It carries out the reaction (2R)-2,3-dihydroxy-3-methylbutanoate = 3-methyl-2-oxobutanoate + H2O. It catalyses the reaction (2R,3R)-2,3-dihydroxy-3-methylpentanoate = (S)-3-methyl-2-oxopentanoate + H2O. The protein operates within amino-acid biosynthesis; L-isoleucine biosynthesis; L-isoleucine from 2-oxobutanoate: step 3/4. It functions in the pathway amino-acid biosynthesis; L-valine biosynthesis; L-valine from pyruvate: step 3/4. Functionally, functions in the biosynthesis of branched-chain amino acids. Catalyzes the dehydration of (2R,3R)-2,3-dihydroxy-3-methylpentanoate (2,3-dihydroxy-3-methylvalerate) into 2-oxo-3-methylpentanoate (2-oxo-3-methylvalerate) and of (2R)-2,3-dihydroxy-3-methylbutanoate (2,3-dihydroxyisovalerate) into 2-oxo-3-methylbutanoate (2-oxoisovalerate), the penultimate precursor to L-isoleucine and L-valine, respectively. In Leptospira borgpetersenii serovar Hardjo-bovis (strain JB197), this protein is Dihydroxy-acid dehydratase.